The sequence spans 81 residues: Small ribosomal subunit protein bS16 (81 aa).

The protein belongs to the bacterial ribosomal protein bS16 family.

This chain is Small ribosomal subunit protein bS16, found in Acetivibrio thermocellus (strain ATCC 27405 / DSM 1237 / JCM 9322 / NBRC 103400 / NCIMB 10682 / NRRL B-4536 / VPI 7372) (Clostridium thermocellum).